Reading from the N-terminus, the 68-residue chain is uncharacterized protein (68 aa).

Residues 2-67 enclose the HMA domain; the sequence is KTITLNIKGI…VIEDAGFDAT (66 aa). Cysteine 13 and cysteine 16 together coordinate a metal cation.

This is an uncharacterized protein from Haemophilus influenzae (strain ATCC 51907 / DSM 11121 / KW20 / Rd).